A 228-amino-acid polypeptide reads, in one-letter code: Lipoprotein-releasing system ATP-binding protein LolD (228 aa).

One can recognise an ABC transporter domain in the interval 5-228 (FALSAISKSF…SGTLQNYTDY (224 aa)). 40–47 (GPSGSGKS) is a binding site for ATP.

This sequence belongs to the ABC transporter superfamily. Lipoprotein translocase (TC 3.A.1.125) family. The complex is composed of two ATP-binding proteins (LolD) and two transmembrane proteins (LolC and LolE).

Its subcellular location is the cell inner membrane. Part of the ABC transporter complex LolCDE involved in the translocation of mature outer membrane-directed lipoproteins, from the inner membrane to the periplasmic chaperone, LolA. Responsible for the formation of the LolA-lipoprotein complex in an ATP-dependent manner. The protein is Lipoprotein-releasing system ATP-binding protein LolD of Ehrlichia ruminantium (strain Gardel).